A 227-amino-acid chain; its full sequence is MHAVLKKMKNKLVVSCQALEEEPLHSSFIMGRMALAAKQGGASGIRANSKEDILEIKSTVDLPVIGIVKRHYPGSDVYITATMTEVDELMEANVDMIAMDATKQKRPKQSLAEMVAAIRNQYPSVALMADVSTLEEAIEADRLGFDCISTTLVGYTAYTAGASASDNDFALLKEMVQAVKAPVIAEGKMNTPALAKCALKAGAHSVVVGGAITRPQQITKTFVEALQ.

The protein belongs to the NanE family.

It catalyses the reaction an N-acyl-D-glucosamine 6-phosphate = an N-acyl-D-mannosamine 6-phosphate. The protein operates within amino-sugar metabolism; N-acetylneuraminate degradation; D-fructose 6-phosphate from N-acetylneuraminate: step 3/5. Functionally, converts N-acetylmannosamine-6-phosphate (ManNAc-6-P) to N-acetylglucosamine-6-phosphate (GlcNAc-6-P). This is Putative N-acetylmannosamine-6-phosphate 2-epimerase from Shouchella clausii (strain KSM-K16) (Alkalihalobacillus clausii).